A 1013-amino-acid polypeptide reads, in one-letter code: MNCCRTLRELEIQVGEKVFKNIKTVMKAFKLIDVNKTGLVRPQELRRVLETFCLKLRDEEYEKFSKHYNIHNDTAVDYNVFLKNLSINNDLNLRYCMGNQEVSLENQQARNSKKERLLGSASSEDIWRNYSLDDIERNFCLELSKSYEKIEKALSAGDPCKGGYVSFNYLKIVLDTFIYQIPRRIFIQLMKRFGLKATTKINWKQFLTSFHEPQGLQVSNKGPLTKRNSINSRSESRKENIITKLFRCTEDRSASLKKALLIINTKPDGPITREEFRYILNCVAIKLSDSEFKELMQILDPGDTGVVNTSMFIDLIEENCRMRKTSPCTDAKTPFLLAWDSVEEIVHDTIARNLQAFYNMLRSYDLGDTGLIGRNNFKKIMHVFCPFLTNAHFIKLCSKIQDIGSGRILYKKLLACIGIDGPPTVSPVLVPKDQLLSEHLQKDEQQQPDLSERTKPTEDKTTLTKKMTTEEVIEKFRKYIQQQDPAFKKRFLDFSKEPNGKINVHDFRKILEDTGMPMDDDQYALLTTKIGFEKEGMSYLDFAAGFEDPPMRGLETTPPQPPTPSKSYVNSHLITAEECLKLFPRRLKESFRDPYSAFFKTDVDRDGIINMHDLHRLLLHLLLNLKDDEFERFLGLLGLRLSVTLNFREFQNLCEKRPWRTDEAPQRLIRPKQKVADSELACEQAHQYLVTKAKNRWSDLSKNFLETDNEGNGILRRRDIKNALYGFDIPLTPREFEKLWARYNTEGKGHITYQEFLQKLGINYSPAVHQPCAEDYFNFMGHFTKPQQLQEEMKELQQSTEKAMAARDKLMDLHQDISKAFTKIDKSKTNYISICKMQKVLEECGCSLTEGELTHLLNSWGVSRHENAINYLDFLRAVENSKSTGAQPKEKEESMPISFATLNPQEVVRKIQEVVESSQLALSTAFSALDKEDTGFVKATEFGQVLKDFCYKLMDNQYHYFLRKLRIHLTPYINWKYFLQNFSCFLEEVRISAAHKHLFENELKLVFTKWIID.

EF-hand domains are found at residues 20–55 (KNIKTVMKAFKLIDVNKTGLVRPQELRRVLETFCLK), 145–180 (KSYEKIEKALSAGDPCKGGYVSFNYLKIVLDTFIYQ), 251–286 (DRSASLKKALLIINTKPDGPITREEFRYILNCVAIK), 287–322 (LSDSEFKELMQILDPGDTGVVNTSMFIDLIEENCRM), and 352–387 (RNLQAFYNMLRSYDLGDTGLIGRNNFKKIMHVFCPF). The tract at residues 441-460 (QKDEQQQPDLSERTKPTEDK) is disordered. EF-hand domains follow at residues 482–517 (QQDPAFKKRFLDFSKEPNGKINVHDFRKILEDTGMP), 589–624 (ESFRDPYSAFFKTDVDRDGIINMHDLHRLLLHLLLN), 695–730 (NRWSDLSKNFLETDNEGNGILRRRDIKNALYGFDIP), 731–766 (LTPREFEKLWARYNTEGKGHITYQEFLQKLGINYSP), 812–847 (DLHQDISKAFTKIDKSKTNYISICKMQKVLEECGCS), and 917–952 (SSQLALSTAFSALDKEDTGFVKATEFGQVLKDFCYK). Ca(2+) is bound by residues aspartate 602, aspartate 604, aspartate 606, and aspartate 613. Threonine 732 carries the post-translational modification Phosphothreonine.

As to quaternary structure, microtubule inner protein component of sperm flagellar doublet microtubules. Binds PARK7. Part of a ternary complex containing PARK7, EFCAB6/DJBP and AR.

It localises to the nucleus. The protein localises to the cytoplasm. Its subcellular location is the cytoskeleton. It is found in the flagellum axoneme. Negatively regulates the androgen receptor by recruiting histone deacetylase complex, and protein DJ-1 antagonizes this inhibition by abrogation of this complex. Microtubule inner protein (MIP) part of the dynein-decorated doublet microtubules (DMTs) in cilia axoneme, which is required for motile cilia beating. The protein is EF-hand calcium-binding domain-containing protein 6 (EFCAB6) of Pongo abelii (Sumatran orangutan).